We begin with the raw amino-acid sequence, 152 residues long: Sec-independent protein translocase protein TatB (152 aa).

The helical transmembrane segment at 1-21 (MFDVAPSELLLVAVVALVVIG) threads the bilayer. Residues 60–71 (EDMEKRWAEENA) are compositionally biased toward basic and acidic residues. The segment at 60-152 (EDMEKRWAEE…KEADQQEKQS (93 aa)) is disordered. Low complexity-rich tracts occupy residues 84-98 (TAST…PVSD) and 124-140 (AANH…STPA). Positions 141 to 152 (KPKEADQQEKQS) are enriched in basic and acidic residues.

This sequence belongs to the TatB family. As to quaternary structure, the Tat system comprises two distinct complexes: a TatABC complex, containing multiple copies of TatA, TatB and TatC subunits, and a separate TatA complex, containing only TatA subunits. Substrates initially bind to the TatABC complex, which probably triggers association of the separate TatA complex to form the active translocon.

It localises to the cell inner membrane. Part of the twin-arginine translocation (Tat) system that transports large folded proteins containing a characteristic twin-arginine motif in their signal peptide across membranes. Together with TatC, TatB is part of a receptor directly interacting with Tat signal peptides. TatB may form an oligomeric binding site that transiently accommodates folded Tat precursor proteins before their translocation. In Zymomonas mobilis subsp. mobilis (strain ATCC 31821 / ZM4 / CP4), this protein is Sec-independent protein translocase protein TatB.